The sequence spans 310 residues: Ribosomal RNA small subunit methyltransferase H (310 aa).

S-adenosyl-L-methionine contacts are provided by residues 32–34 (GGH), Asp-52, Phe-79, Asp-100, and Gln-107.

This sequence belongs to the methyltransferase superfamily. RsmH family.

The protein localises to the cytoplasm. It carries out the reaction cytidine(1402) in 16S rRNA + S-adenosyl-L-methionine = N(4)-methylcytidine(1402) in 16S rRNA + S-adenosyl-L-homocysteine + H(+). Functionally, specifically methylates the N4 position of cytidine in position 1402 (C1402) of 16S rRNA. The protein is Ribosomal RNA small subunit methyltransferase H of Bacillus cereus (strain ATCC 10987 / NRS 248).